The sequence spans 327 residues: Probable NAD(P)H-dependent D-xylose reductase xyl1 (327 aa).

Residue Tyr57 is the Proton donor of the active site. Residue His119 coordinates substrate. NAD(+)-binding positions include 173–174, 222–231, and 278–288; these read SN, SSLGPQSFIE, and KSNNPDRLAQN.

Belongs to the aldo/keto reductase family.

It catalyses the reaction xylitol + NAD(+) = D-xylose + NADH + H(+). The enzyme catalyses xylitol + NADP(+) = D-xylose + NADPH + H(+). The protein operates within carbohydrate metabolism; D-xylose degradation. Catalyzes the initial reaction in the xylose utilization pathway by reducing D-xylose into xylitol. Xylose is a major component of hemicelluloses such as xylan. Most fungi utilize D-xylose via three enzymatic reactions, xylose reductase (XR), xylitol dehydrogenase (XDH), and xylulokinase, to form xylulose 5-phosphate, which enters pentose phosphate pathway. This is Probable NAD(P)H-dependent D-xylose reductase xyl1 (xyl1) from Arthroderma otae (strain ATCC MYA-4605 / CBS 113480) (Microsporum canis).